Consider the following 125-residue polypeptide: UPF0225 protein Cgl1438/cg1626 (125 aa).

Belongs to the UPF0225 family.

The chain is UPF0225 protein Cgl1438/cg1626 from Corynebacterium glutamicum (strain ATCC 13032 / DSM 20300 / JCM 1318 / BCRC 11384 / CCUG 27702 / LMG 3730 / NBRC 12168 / NCIMB 10025 / NRRL B-2784 / 534).